An 81-amino-acid chain; its full sequence is MASLKVFSFALLIVLTFSVIGMIYNVESGGSLCCNSHPKFGKCNTNNDEQRCNRWCHNGCGNGKGGYYKSMSHGGQCHYYC.

The signal sequence occupies residues 1–21 (MASLKVFSFALLIVLTFSVIG). 2 disulfide bridges follow: Cys33-Cys81 and Cys52-Cys77.

Belongs to the DEFL family.

It is found in the secreted. In Arabidopsis thaliana (Mouse-ear cress), this protein is Putative defensin-like protein 26.